A 171-amino-acid chain; its full sequence is 3-hydroxydecanoyl-[acyl-carrier-protein] dehydratase (171 aa).

The active site involves His71.

Belongs to the thioester dehydratase family. FabA subfamily. Homodimer.

Its subcellular location is the cytoplasm. It catalyses the reaction a (3R)-hydroxyacyl-[ACP] = a (2E)-enoyl-[ACP] + H2O. The enzyme catalyses (3R)-hydroxydecanoyl-[ACP] = (2E)-decenoyl-[ACP] + H2O. The catalysed reaction is (2E)-decenoyl-[ACP] = (3Z)-decenoyl-[ACP]. It participates in lipid metabolism; fatty acid biosynthesis. Its function is as follows. Necessary for the introduction of cis unsaturation into fatty acids. Catalyzes the dehydration of (3R)-3-hydroxydecanoyl-ACP to E-(2)-decenoyl-ACP and then its isomerization to Z-(3)-decenoyl-ACP. Can catalyze the dehydratase reaction for beta-hydroxyacyl-ACPs with saturated chain lengths up to 16:0, being most active on intermediate chain length. The chain is 3-hydroxydecanoyl-[acyl-carrier-protein] dehydratase from Hamiltonella defensa subsp. Acyrthosiphon pisum (strain 5AT).